Here is a 466-residue protein sequence, read N- to C-terminus: Asparagine--tRNA ligase (466 aa).

The protein belongs to the class-II aminoacyl-tRNA synthetase family. In terms of assembly, homodimer.

It localises to the cytoplasm. It carries out the reaction tRNA(Asn) + L-asparagine + ATP = L-asparaginyl-tRNA(Asn) + AMP + diphosphate + H(+). The protein is Asparagine--tRNA ligase of Shewanella amazonensis (strain ATCC BAA-1098 / SB2B).